The chain runs to 727 residues: Sodium-dependent neutral amino acid transporter SLC6A17 (727 aa).

Residues 1–68 lie on the Cytoplasmic side of the membrane; that stretch reads MPKNSKVTQR…DRPAWNSKLQ (68 aa). Residues serine 13 and serine 20 each carry the phosphoserine modification. A helical transmembrane segment spans residues 69-89; that stretch reads YILAQIGFSVGLGNIWRFPYL. The Extracellular segment spans residues 90 to 96; the sequence is CQKNGGG. Residues 97 to 116 form a helical membrane-spanning segment; it reads AYLVPYLVLLIIIGIPLFFL. The Cytoplasmic portion of the chain corresponds to 117–140; sequence ELAVGQRIRRGSIGVWHYVCPRLG. Residues 141 to 161 form a helical membrane-spanning segment; the sequence is GIGFSSCIVCLFVGLYYNVII. Residues 162–224 lie on the Extracellular side of the membrane; it reads GWSVFYFFKS…NSISESGGLN (63 aa). Residue asparagine 186 is glycosylated (N-linked (GlcNAc...) asparagine). A helical transmembrane segment spans residues 225–243; the sequence is WKMTVCLLVAWSIVGMAVV. Residues 244–251 lie on the Cytoplasmic side of the membrane; it reads KGIQSSGK. A helical membrane pass occupies residues 252 to 269; the sequence is VMYFSSLFPYVVLACFLV. At 270–304 the chain is on the extracellular side; sequence RGLLLRGAVDGILHMFTPKLDKMLDPQVWREAATQ. A helical transmembrane segment spans residues 305 to 322; that stretch reads VFFALGLGFGGVIAFSSY. At 323–333 the chain is on the cytoplasmic side; the sequence is NKQDNNCHFDA. The helical transmembrane segment at 334–355 threads the bilayer; sequence ALVSFINFFTSVLATLVVFAVL. Residues 356 to 451 are Extracellular-facing; it reads GFKANIMNEK…FIAFTEAMTH (96 aa). Position 377 is a phosphotyrosine (tyrosine 377). An N-linked (GlcNAc...) asparagine glycan is attached at asparagine 393. Residues 452 to 471 form a helical membrane-spanning segment; that stretch reads FPASPFWSVMFFLMLINLGL. Residues 472–494 are Cytoplasmic-facing; the sequence is GSMIGTMAGITTPIIDTFKVPKE. The chain crosses the membrane as a helical span at residues 495–513; it reads MFTVGCCVFAFFVGLLFVQ. Over 514 to 528 the chain is Extracellular; sequence RSGNYFVTMFDDYSA. Residues 529–549 traverse the membrane as a helical segment; the sequence is TLPLTVIVILENIAVAWIYGT. The Cytoplasmic portion of the chain corresponds to 550–569; that stretch reads KKFMQELTEMLGFRPYRFYF. A helical transmembrane segment spans residues 570–591; sequence YMWKFVSPLCMAVLTTASIIQL. Over 592-618 the chain is Extracellular; it reads GVSPPGYSAWIKEEAAERYLYFPNWAM. A helical membrane pass occupies residues 619-641; that stretch reads ALLITLIAVATLPIPVVFILRHF. Topologically, residues 642-727 are cytoplasmic; sequence HLLSDGSNTL…LLASTPESEL (86 aa). Residues serine 665 and serine 701 each carry the phosphoserine modification. A disordered region spans residues 680–727; that stretch reads VPSEAPSPMPTHRSYLGPGSTSPLESSSHPNGRYGSGYLLASTPESEL. Positions 698-709 are enriched in polar residues; it reads GSTSPLESSSHP.

It belongs to the sodium:neurotransmitter symporter (SNF) (TC 2.A.22) family. In terms of tissue distribution, found exclusively in the central nervous system and is more abundant in the cerebellum and the cerebral cortex. Expressed in PC-12 cell line.

The protein resides in the cytoplasmic vesicle. It localises to the secretory vesicle. The protein localises to the synaptic vesicle membrane. It is found in the postsynapse. Its subcellular location is the presynapse. It carries out the reaction L-proline(in) + Na(+)(in) = L-proline(out) + Na(+)(out). It catalyses the reaction L-leucine(in) + Na(+)(in) = L-leucine(out) + Na(+)(out). The enzyme catalyses glycine(in) + Na(+)(in) = glycine(out) + Na(+)(out). The catalysed reaction is L-alanine(in) + Na(+)(in) = L-alanine(out) + Na(+)(out). It carries out the reaction L-glutamine(in) + Na(+)(in) = L-glutamine(out) + Na(+)(out). In terms of biological role, synaptic vesicle transporter with apparent selectivity for neutral amino acids. The transport is sodium-coupled but chloride-independent, likely driven by the proton electrochemical gradient generated by vacuolar H(+)-ATPase in an overall electrogenic mechanism. May contribute to the synaptic uptake of neurotransmitter precursors in a process coupled in part to vesicle exocytosis. This is Sodium-dependent neutral amino acid transporter SLC6A17 from Rattus norvegicus (Rat).